Reading from the N-terminus, the 136-residue chain is S-protein homolog 25 (136 aa).

An N-terminal signal peptide occupies residues 1–20; it reads MNHSVFVILITITYFGLNQA. Residues Asn-71 and Asn-84 are each glycosylated (N-linked (GlcNAc...) asparagine).

This sequence belongs to the plant self-incompatibility (S1) protein family.

The protein resides in the secreted. The polypeptide is S-protein homolog 25 (Arabidopsis thaliana (Mouse-ear cress)).